A 95-amino-acid polypeptide reads, in one-letter code: Cell division protein FtsB (95 aa).

Over M1 to W3 the chain is Cytoplasmic. A helical transmembrane segment spans residues V4 to I21. The Periplasmic portion of the chain corresponds to G22–P95. Positions V26–R73 form a coiled coil.

This sequence belongs to the FtsB family. As to quaternary structure, part of a complex composed of FtsB, FtsL and FtsQ.

It localises to the cell inner membrane. Essential cell division protein. May link together the upstream cell division proteins, which are predominantly cytoplasmic, with the downstream cell division proteins, which are predominantly periplasmic. The sequence is that of Cell division protein FtsB from Thioalkalivibrio sulfidiphilus (strain HL-EbGR7).